Reading from the N-terminus, the 297-residue chain is Light-independent protochlorophyllide reductase iron-sulfur ATP-binding protein (297 aa).

ATP contacts are provided by residues 41-46 (GIGKST) and Lys-70. Ser-45 contributes to the Mg(2+) binding site. Residues Cys-126 and Cys-160 each coordinate [4Fe-4S] cluster. Residues 211–212 (NR) and 235–237 (PDL) each bind ATP.

Belongs to the NifH/BchL/ChlL family. Homodimer. Protochlorophyllide reductase is composed of three subunits; BchL, BchN and BchB. The cofactor is [4Fe-4S] cluster.

The enzyme catalyses chlorophyllide a + oxidized 2[4Fe-4S]-[ferredoxin] + 2 ADP + 2 phosphate = protochlorophyllide a + reduced 2[4Fe-4S]-[ferredoxin] + 2 ATP + 2 H2O. Its pathway is porphyrin-containing compound metabolism; bacteriochlorophyll biosynthesis (light-independent). Its function is as follows. Component of the dark-operative protochlorophyllide reductase (DPOR) that uses Mg-ATP and reduced ferredoxin to reduce ring D of protochlorophyllide (Pchlide) to form chlorophyllide a (Chlide). This reaction is light-independent. The L component serves as a unique electron donor to the NB-component of the complex, and binds Mg-ATP. The sequence is that of Light-independent protochlorophyllide reductase iron-sulfur ATP-binding protein from Methylorubrum extorquens (strain CM4 / NCIMB 13688) (Methylobacterium extorquens).